We begin with the raw amino-acid sequence, 223 residues long: DNA mismatch repair protein MutH (223 aa).

It belongs to the MutH family.

The protein localises to the cytoplasm. Sequence-specific endonuclease that cleaves unmethylated GATC sequences. It is involved in DNA mismatch repair. The chain is DNA mismatch repair protein MutH from Haemophilus influenzae (strain ATCC 51907 / DSM 11121 / KW20 / Rd).